Consider the following 260-residue polypeptide: Hydroxyacylglutathione hydrolase (260 aa).

Zn(2+) is bound by residues His-66, His-68, Asp-70, His-71, His-125, Asp-150, and His-188.

It belongs to the metallo-beta-lactamase superfamily. Glyoxalase II family. In terms of assembly, monomer. Zn(2+) serves as cofactor.

The enzyme catalyses an S-(2-hydroxyacyl)glutathione + H2O = a 2-hydroxy carboxylate + glutathione + H(+). It functions in the pathway secondary metabolite metabolism; methylglyoxal degradation; (R)-lactate from methylglyoxal: step 2/2. In terms of biological role, thiolesterase that catalyzes the hydrolysis of S-D-lactoyl-glutathione to form glutathione and D-lactic acid. In Prochlorococcus marinus (strain MIT 9303), this protein is Hydroxyacylglutathione hydrolase.